The sequence spans 593 residues: Metal-response element-binding transcription factor 2 (593 aa).

Positions 1 to 35 (MRDSTGAGNSLVHKRSPLRRNQKTPTSLTKLSLQD) are disordered. The span at 12 to 22 (VHKRSPLRRNQ) shows a compositional bias: basic residues. Positions 23 to 32 (KTPTSLTKLS) are enriched in polar residues. T24 carries the phosphothreonine modification. The region spanning 44–101 (CKFEEGQDVLARWSDGLFYLGTIKKINILKQSCFIIFEDSSKSWVLWKDIQTGATGSG) is the Tudor domain. 2 consecutive PHD-type zinc fingers follow at residues 102–157 (EMVC…CVFA) and 201–255 (QCYC…CSSG). K360 participates in a covalent cross-link: Glycyl lysine isopeptide (Lys-Gly) (interchain with G-Cter in SUMO2). Residues 360–374 (KAEKEPEGTSHEFKI) are compositionally biased toward basic and acidic residues. Disordered stretches follow at residues 360–411 (KAEK…PYTR) and 424–486 (KESI…TRTG). The span at 445 to 454 (TAHSSNTSDV) shows a compositional bias: polar residues. S452 is modified (phosphoserine). A compositionally biased stretch (low complexity) spans 459–471 (ASSAKETTSSSIS). A Glycyl lysine isopeptide (Lys-Gly) (interchain with G-Cter in SUMO2) cross-link involves residue K522.

Belongs to the Polycomblike family. In terms of assembly, associates with the PRC2 complex, which consists of the core components EED, EZH1 or EZH2, SUZ12, and RBBP4, and various combinations of accessory subunits including AEBP2, JARID2, PHF19, MTF2 and EPOP. Forms a dimeric PRC2.1 (class 1, PRC-PCL) complex consisting of at least SUZ12, RBBP4, and PHF19 or MTF2; PHF19 and MTF2 stabilize the dimeric structure which enhances PRC2 interaction with chromatin.

Its subcellular location is the nucleus. Its function is as follows. Polycomb group (PcG) protein that specifically binds histone H3 trimethylated at 'Lys-36' (H3K36me3) and recruits the PRC2 complex, thus enhancing PRC2 H3K27me3 methylation activity. Regulates the transcriptional networks during embryonic stem cell self-renewal and differentiation. Promotes recruitment of the PRC2 complex to the inactive X chromosome in differentiating XX ES cells and PRC2 recruitment to target genes in undifferentiated ES cells. Required to repress Hox genes by enhancing H3K27me3 methylation of the PRC2 complex. In some conditions may act as an inhibitor of PRC2 activity: able to activate the CDKN2A gene and promote cellular senescence by suppressing the catalytic activity of the PRC2 complex locally. Binds to the metal-regulating-element (MRE) of MT1A gene promoter. This Homo sapiens (Human) protein is Metal-response element-binding transcription factor 2 (MTF2).